Reading from the N-terminus, the 167-residue chain is Crossover junction endodeoxyribonuclease RuvC (167 aa).

Residues Asp-14, Glu-75, and Asp-147 contribute to the active site. Mg(2+) is bound by residues Asp-14, Glu-75, and Asp-147.

This sequence belongs to the RuvC family. As to quaternary structure, homodimer which binds Holliday junction (HJ) DNA. The HJ becomes 2-fold symmetrical on binding to RuvC with unstacked arms; it has a different conformation from HJ DNA in complex with RuvA. In the full resolvosome a probable DNA-RuvA(4)-RuvB(12)-RuvC(2) complex forms which resolves the HJ. Requires Mg(2+) as cofactor.

Its subcellular location is the cytoplasm. The catalysed reaction is Endonucleolytic cleavage at a junction such as a reciprocal single-stranded crossover between two homologous DNA duplexes (Holliday junction).. The RuvA-RuvB-RuvC complex processes Holliday junction (HJ) DNA during genetic recombination and DNA repair. Endonuclease that resolves HJ intermediates. Cleaves cruciform DNA by making single-stranded nicks across the HJ at symmetrical positions within the homologous arms, yielding a 5'-phosphate and a 3'-hydroxyl group; requires a central core of homology in the junction. The consensus cleavage sequence is 5'-(A/T)TT(C/G)-3'. Cleavage occurs on the 3'-side of the TT dinucleotide at the point of strand exchange. HJ branch migration catalyzed by RuvA-RuvB allows RuvC to scan DNA until it finds its consensus sequence, where it cleaves and resolves the cruciform DNA. The chain is Crossover junction endodeoxyribonuclease RuvC from Synechocystis sp. (strain ATCC 27184 / PCC 6803 / Kazusa).